Consider the following 265-residue polypeptide: Novel plant SNARE 12 (265 aa).

Residues 1 to 217 (MASELPMSPH…IGRQVATDKC (217 aa)) are Cytoplasmic-facing. Residues 32–106 (LDKIKDSSRQ…ALRKTYLNTL (75 aa)) are a coiled coil. Residue serine 74 is modified to Phosphoserine. The 63-residue stretch at 146–208 (MKRMDETDQA…KKASQLVKEI (63 aa)) folds into the t-SNARE coiled-coil homology domain. Residues 218–238 (IMAFLFLIVCGVIAIIIVKIV) traverse the membrane as a helical; Anchor for type IV membrane protein segment. Topologically, residues 239 to 265 (NPNNKDIRDIPGLAPPAQSRKLLYFRE) are vesicular.

This sequence belongs to the novel plant SNARE family. In terms of tissue distribution, expressed in roots, stems, flower, siliques and leaves.

It localises to the membrane. Its function is as follows. Vesicle trafficking protein that functions in the secretory pathway. The polypeptide is Novel plant SNARE 12 (NPSN12) (Arabidopsis thaliana (Mouse-ear cress)).